We begin with the raw amino-acid sequence, 107 residues long: Regulatory protein SoxS (107 aa).

The HTH araC/xylS-type domain occupies 8-106 (QDLIAWIDEH…DRTPSDYRHR (99 aa)). DNA-binding regions (H-T-H motif) lie at residues 25–46 (DVVAKKSGYSKWYLQRMFRTVT) and 73–96 (IFDIAMDLGYVSQQTFSRVFRRQF).

Its subcellular location is the cytoplasm. In terms of biological role, transcriptional activator of the superoxide response regulon of E.coli that includes at least 10 genes such as sodA, nfo, zwf and micF. Binds the DNA sequence 5'-GCACN(7)CAA-3'. It also facilitates the subsequent binding of RNA polymerase to the micF and the nfo promoters. This chain is Regulatory protein SoxS (soxS), found in Escherichia coli O157:H7.